Consider the following 453-residue polypeptide: tRNA modification GTPase MnmE (453 aa).

3 residues coordinate (6S)-5-formyl-5,6,7,8-tetrahydrofolate: Arg-22, Glu-79, and Lys-119. Residues 215–376 form the TrmE-type G domain; it reads GMKVVIAGRP…LQQHLKSLMG (162 aa). Residue Asn-225 coordinates K(+). GTP-binding positions include 225–230, 244–250, 269–272, and 334–337; these read NAGKSS, TEIAGTT, DTAG, and NKAD. Residue Ser-229 participates in Mg(2+) binding. The K(+) site is built by Thr-244, Ile-246, and Thr-249. Thr-250 contributes to the Mg(2+) binding site. Position 453 (Lys-453) interacts with (6S)-5-formyl-5,6,7,8-tetrahydrofolate.

This sequence belongs to the TRAFAC class TrmE-Era-EngA-EngB-Septin-like GTPase superfamily. TrmE GTPase family. In terms of assembly, homodimer. Heterotetramer of two MnmE and two MnmG subunits. Requires K(+) as cofactor.

The protein resides in the cytoplasm. Exhibits a very high intrinsic GTPase hydrolysis rate. Involved in the addition of a carboxymethylaminomethyl (cmnm) group at the wobble position (U34) of certain tRNAs, forming tRNA-cmnm(5)s(2)U34. The sequence is that of tRNA modification GTPase MnmE from Shewanella sediminis (strain HAW-EB3).